A 91-amino-acid polypeptide reads, in one-letter code: Elongation factor 1-beta (91 aa).

This sequence belongs to the EF-1-beta/EF-1-delta family.

Functionally, promotes the exchange of GDP for GTP in EF-1-alpha/GDP, thus allowing the regeneration of EF-1-alpha/GTP that could then be used to form the ternary complex EF-1-alpha/GTP/AAtRNA. This chain is Elongation factor 1-beta, found in Caldivirga maquilingensis (strain ATCC 700844 / DSM 13496 / JCM 10307 / IC-167).